We begin with the raw amino-acid sequence, 1307 residues long: tRNA(adenine(34)) deaminase, chloroplastic (1307 aa).

The N-terminal 55 residues, 1-55 (MFNTYTNSLQWPIRSRNQQDYCSLLPERSESYKLSKAYTSSRCYCVSSRSSCCCC), are a transit peptide targeting the chloroplast. 7 disordered regions span residues 245–377 (EYIG…ESTG), 439–458 (SSED…SSQE), 544–563 (HNPL…SHTS), 576–618 (EKRL…GQTT), 753–807 (GVIN…ATEG), 837–957 (SRAG…EEGG), and 975–1073 (LPSR…SVSA). Residues 267 to 278 (SSCSSYYSLASS) show a composition bias toward low complexity. Positions 280 to 309 (EFESDTEDQEEDVEIYRENVRSSEKKVVDQ) form a coiled coil. The span at 281 to 292 (FESDTEDQEEDV) shows a compositional bias: acidic residues. A compositionally biased stretch (basic and acidic residues) spans 293–321 (EIYRENVRSSEKKVVDQSAKRLKSRKEAS). A compositionally biased stretch (polar residues) spans 367–377 (QTENRVSESTG). Over residues 439-448 (SSEDRVSEMR) the composition is skewed to basic and acidic residues. 2 stretches are compositionally biased toward polar residues: residues 546-563 (PLQT…SHTS) and 582-591 (QGSTTAVQSD). Composition is skewed to basic and acidic residues over residues 592 to 615 (SKVE…KKDG) and 760 to 771 (EEQRAESNQLKR). Positions 852-863 (SSPNESVSSATW) are enriched in polar residues. The segment covering 866 to 883 (GREHDGSSDDNTKGDKVL) has biased composition (basic and acidic residues). Composition is skewed to polar residues over residues 895-907 (VGQT…SEYP), 924-947 (SSPS…SGNQ), and 1045-1073 (SGSS…SVSA). The region spanning 1108 to 1230 (TVDEIFMREA…RLFPGGEGNG (123 aa)) is the CMP/dCMP-type deaminase domain. A Zn(2+)-binding site is contributed by H1159. E1161 (proton donor) is an active-site residue. Residues C1189 and C1192 each coordinate Zn(2+). The interval 1268-1293 (QLRRKKKDKNSDPPTPTDHHHHHLPK) is disordered.

It belongs to the cytidine and deoxycytidylate deaminase family. Homodimer. Requires Zn(2+) as cofactor.

The protein localises to the plastid. Its subcellular location is the chloroplast. It carries out the reaction adenosine(34) in tRNA + H2O + H(+) = inosine(34) in tRNA + NH4(+). Its function is as follows. Deaminates adenosines to inosines in tRNA-Arg(ACG). Exclusively involved in A-to-I editing of the prokaryote-type chloroplast-tRNA and not involved in C-to-U editing. This is tRNA(adenine(34)) deaminase, chloroplastic (TADA) from Arabidopsis thaliana (Mouse-ear cress).